The following is a 491-amino-acid chain: ATP synthase subunit beta, chloroplastic (491 aa).

Position 163–170 (163–170) interacts with ATP; it reads GGAGVGKT.

It belongs to the ATPase alpha/beta chains family. F-type ATPases have 2 components, CF(1) - the catalytic core - and CF(0) - the membrane proton channel. CF(1) has five subunits: alpha(3), beta(3), gamma(1), delta(1), epsilon(1). CF(0) has four main subunits: a(1), b(1), b'(1) and c(9-12).

The protein localises to the plastid. It localises to the chloroplast thylakoid membrane. It catalyses the reaction ATP + H2O + 4 H(+)(in) = ADP + phosphate + 5 H(+)(out). Its function is as follows. Produces ATP from ADP in the presence of a proton gradient across the membrane. The catalytic sites are hosted primarily by the beta subunits. The chain is ATP synthase subunit beta, chloroplastic from Nephroselmis olivacea (Green alga).